A 531-amino-acid chain; its full sequence is Sop-2-related protein 3 (531 aa).

Expressed ubiquitously.

Its subcellular location is the cytoplasm. The protein localises to the nucleus. Functionally, probably acts synergistically with sop-2 to maintain the transcriptionally repressive state of homeotic genes in order to regulate various neurogenic identities. Specification of some neuronal identities also involves expression of non-Hox genes. Specifies dopaminergic and serotonergic neuronal cell fate, and regulates neurotransmitter choice and axon pathfinding. This chain is Sop-2-related protein 3 (sor-3), found in Caenorhabditis elegans.